Consider the following 410-residue polypeptide: LIMR family protein SELMODRAFT_432208 (410 aa).

The next 5 helical transmembrane spans lie at 30–50, 67–87, 129–149, 156–176, and 179–199; these read LWWA…IFFY, LWVV…YAVI, VTLM…LTTL, ICLD…NTII, and ILFM…LIFA. Residues 245–274 adopt a coiled-coil conformation; that stretch reads RMFRKNVKKVQQELVFLEDDVEALNEAFPQ. 2 helical membrane-spanning segments follow: residues 288–308 and 330–350; these read LVFG…IIVF and GGLL…MSVI. Residues 389-400 are compositionally biased toward low complexity; sequence PSSAMDSSSWSA. Positions 389-410 are disordered; it reads PSSAMDSSSWSADRPCRPWPWP.

The protein belongs to the LIMR family.

It is found in the membrane. This is LIMR family protein SELMODRAFT_432208 from Selaginella moellendorffii (Spikemoss).